The primary structure comprises 106 residues: MGMNQQRLTQVILVPVVSEKSNVLAEKCNQMTFKVLANATKPEIKAAVELLFGVQVASVTTVTTKGKTKRFGRILGRRSDVKKAYVSLVDGQELDLEAAAAAADKE.

It belongs to the universal ribosomal protein uL23 family. In terms of assembly, part of the 50S ribosomal subunit. Contacts protein L29, and trigger factor when it is bound to the ribosome.

In terms of biological role, one of the early assembly proteins it binds 23S rRNA. One of the proteins that surrounds the polypeptide exit tunnel on the outside of the ribosome. Forms the main docking site for trigger factor binding to the ribosome. The chain is Large ribosomal subunit protein uL23 from Neisseria gonorrhoeae (strain ATCC 700825 / FA 1090).